The sequence spans 1129 residues: Eukaryotic translation initiation factor 3 subunit A (1129 aa).

The 184-residue stretch at 319-502 (LQRMAAHVLL…NSIYFGTDLT (184 aa)) folds into the PCI domain. Disordered regions lie at residues 590–633 (NNAR…NEIQ) and 836–1129 (AAEA…VKRR). 5 stretches are compositionally biased toward basic and acidic residues: residues 836–903 (AAEA…RSER), 923–964 (DRND…KDTD), 971–985 (WRVRREPVEPQRERG), 994–1044 (GRDD…DQPQ), and 1053–1076 (DSPRQNDRDNRDNRRPAGDRRDIR). Residues 1080-1091 (PKEGGGGGGGGN) show a composition bias toward gly residues. Over residues 1098–1119 (PRDEKPPVKRDQPQDKENKAGD) the composition is skewed to basic and acidic residues.

Belongs to the eIF-3 subunit A family. Component of the eukaryotic translation initiation factor 3 (eIF-3) complex. The eIF-3 complex interacts with pix.

Its subcellular location is the cytoplasm. Its function is as follows. RNA-binding component of the eukaryotic translation initiation factor 3 (eIF-3) complex, which is involved in protein synthesis of a specialized repertoire of mRNAs and, together with other initiation factors, stimulates binding of mRNA and methionyl-tRNAi to the 40S ribosome. The eIF-3 complex specifically targets and initiates translation of a subset of mRNAs involved in cell proliferation. This is Eukaryotic translation initiation factor 3 subunit A from Drosophila mojavensis (Fruit fly).